A 323-amino-acid chain; its full sequence is tRNA U34 carboxymethyltransferase (323 aa).

Residues Lys-91, Trp-105, Lys-110, Gly-130, 181–182, Met-196, Tyr-200, and Arg-315 each bind carboxy-S-adenosyl-L-methionine; that span reads IE.

The protein belongs to the class I-like SAM-binding methyltransferase superfamily. CmoB family. Homotetramer.

The enzyme catalyses carboxy-S-adenosyl-L-methionine + 5-hydroxyuridine(34) in tRNA = 5-carboxymethoxyuridine(34) in tRNA + S-adenosyl-L-homocysteine + H(+). In terms of biological role, catalyzes carboxymethyl transfer from carboxy-S-adenosyl-L-methionine (Cx-SAM) to 5-hydroxyuridine (ho5U) to form 5-carboxymethoxyuridine (cmo5U) at position 34 in tRNAs. In Enterobacter sp. (strain 638), this protein is tRNA U34 carboxymethyltransferase.